A 247-amino-acid chain; its full sequence is Protein NipSnap homolog 3A (247 aa).

Lys48 and Lys166 each carry N6-acetyllysine.

The protein belongs to the NipSnap family.

Its subcellular location is the cytoplasm. It is found in the cytosol. This Pongo abelii (Sumatran orangutan) protein is Protein NipSnap homolog 3A (NIPSNAP3A).